The chain runs to 207 residues: Protein GrpE (207 aa).

2 stretches are compositionally biased toward basic and acidic residues: residues 1 to 11 and 57 to 66; these read MEENRDVKNEE and DLVKNQEEEN. A disordered region spans residues 1 to 66; sequence MEENRDVKNE…DLVKNQEEEN (66 aa).

The protein belongs to the GrpE family. In terms of assembly, homodimer.

The protein localises to the cytoplasm. Its function is as follows. Participates actively in the response to hyperosmotic and heat shock by preventing the aggregation of stress-denatured proteins, in association with DnaK and GrpE. It is the nucleotide exchange factor for DnaK and may function as a thermosensor. Unfolded proteins bind initially to DnaJ; upon interaction with the DnaJ-bound protein, DnaK hydrolyzes its bound ATP, resulting in the formation of a stable complex. GrpE releases ADP from DnaK; ATP binding to DnaK triggers the release of the substrate protein, thus completing the reaction cycle. Several rounds of ATP-dependent interactions between DnaJ, DnaK and GrpE are required for fully efficient folding. This chain is Protein GrpE, found in Clostridium beijerinckii (strain ATCC 51743 / NCIMB 8052) (Clostridium acetobutylicum).